We begin with the raw amino-acid sequence, 821 residues long: Xylosyltransferase 1 (821 aa).

Residues 1-121 are disordered; sequence YFSHRPKEKV…PETKSDQVPK (121 aa). At 1 to 821 the chain is on the lumenal side; the sequence is YFSHRPKEKV…GAVKPDGRLR (821 aa). The segment covering 9-25 has biased composition (basic and acidic residues); that stretch reads KVRTDSNNENSVPKDFE. The segment covering 27 to 36 has biased composition (polar residues); that stretch reads VDNSNFAPRT. Composition is skewed to basic and acidic residues over residues 41–58 and 76–87; these read HQPE…ERLQ and GPKEVLPPREKA. N-linked (GlcNAc...) asparagine glycosylation is present at asparagine 90. 4 disulfide bridges follow: cysteine 122–cysteine 150, cysteine 166–cysteine 407, cysteine 426–cysteine 439, and cysteine 428–cysteine 437. Residues valine 198, aspartate 226, and 255 to 257 each bind UDP-alpha-D-xylose; that span reads TIW. Asparagine 286 is a glycosylation site (N-linked (GlcNAc...) asparagine). 359 to 360 is a UDP-alpha-D-xylose binding site; that stretch reads DW. Residues serine 440 and 463–464 each bind UDP-alpha-D-xylose; that span reads RK. 2 disulfides stabilise this stretch: cysteine 540/cysteine 789 and cysteine 782/cysteine 795. Asparagine 642 carries N-linked (GlcNAc...) asparagine glycosylation. The disordered stretch occupies residues 801 to 821; sequence SSFSPDPKSELGAVKPDGRLR.

Belongs to the glycosyltransferase 14 family. XylT subfamily. In terms of assembly, monomer. A divalent metal cation serves as cofactor. In terms of processing, contains 7 disulfide bonds. Post-translationally, N-glycosylated.

The protein resides in the golgi apparatus membrane. It carries out the reaction UDP-alpha-D-xylose + L-seryl-[protein] = 3-O-(beta-D-xylosyl)-L-seryl-[protein] + UDP + H(+). It functions in the pathway glycan metabolism; chondroitin sulfate biosynthesis. It participates in glycan metabolism; heparan sulfate biosynthesis. Catalyzes the first step in the biosynthesis of chondroitin sulfate and dermatan sulfate proteoglycans, such as DCN. Transfers D-xylose from UDP-D-xylose to specific serine residues of the core protein. Required for normal maturation of chondrocytes during bone development, normal onset of ossification and normal embryonic and postnatal skeleton development, especially of the long bones. The chain is Xylosyltransferase 1 (Xylt1) from Rattus norvegicus (Rat).